The chain runs to 126 residues: MLVPLHFLAVGVGAAAGAWLRWLLGLKFNVSGWPWGTLAANLGGGYLIGLILGLITLHPEWPAWVRLALVTGFLGGLTTFSTFSAEVVQYLERGQFGHAAGYAVVSLAGSLCLTALGLATAHLMGR.

The next 4 helical transmembrane spans lie at Leu-5 to Gly-25, Trp-35 to Ile-55, Ala-68 to Val-88, and Ala-99 to Ala-119. Residues Gly-75 and Thr-78 each coordinate Na(+).

Belongs to the fluoride channel Fluc/FEX (TC 1.A.43) family.

It is found in the cell inner membrane. The enzyme catalyses fluoride(in) = fluoride(out). Its activity is regulated as follows. Na(+) is not transported, but it plays an essential structural role and its presence is essential for fluoride channel function. Functionally, fluoride-specific ion channel. Important for reducing fluoride concentration in the cell, thus reducing its toxicity. This is Fluoride-specific ion channel FluC from Bordetella avium (strain 197N).